A 343-amino-acid polypeptide reads, in one-letter code: MLVLGIESTCDETACAIVRDGKDILSNIVASQIDLHKEYGGVVPELACRRHIDLIIPVIDQALNQAKLTLEQIDLIAVANGPGLIGALLIGLNTAKALALALRKPFIGINHVEAHLYAAIMSHPQDFQFPCLGVVLSGGHTALVLIKQIGQYELIGQTVDDAVGEAFDKVAKMLNLPYPGGPEIENLARHGRSVKFNFKAGQVKGRPLDFSFSGLKTAVLYAIKDPKALKEMVLLSSEMTQDIAASFQEAACSDIVKKSLLAAKQYGVNTLLFGGGVTNNCYLRKLFSVANSNLNYIWPSAGLSLDNAAMIAGLGYYRYQLQNKSDSMDLEPLTRTPLQSVKE.

2 residues coordinate Fe cation: His-111 and His-115. Residues 135–139, Asp-168, Gly-181, and Asn-280 each bind substrate; that span reads VLSGG. Asp-306 lines the Fe cation pocket.

Belongs to the KAE1 / TsaD family. Fe(2+) is required as a cofactor.

It localises to the cytoplasm. The enzyme catalyses L-threonylcarbamoyladenylate + adenosine(37) in tRNA = N(6)-L-threonylcarbamoyladenosine(37) in tRNA + AMP + H(+). Required for the formation of a threonylcarbamoyl group on adenosine at position 37 (t(6)A37) in tRNAs that read codons beginning with adenine. Is involved in the transfer of the threonylcarbamoyl moiety of threonylcarbamoyl-AMP (TC-AMP) to the N6 group of A37, together with TsaE and TsaB. TsaD likely plays a direct catalytic role in this reaction. This Protochlamydia amoebophila (strain UWE25) protein is tRNA N6-adenosine threonylcarbamoyltransferase.